A 205-amino-acid chain; its full sequence is UPF0688 protein C1orf174 homolog (205 aa).

Residues 1–18 show a composition bias toward basic residues; sequence MRKRKLSDRVRCSARLKN. Disordered stretches follow at residues 1-128 and 184-205; these read MRKR…PSKV and AKEE…EGNI. Residues 46–63 show a composition bias toward basic and acidic residues; sequence NTDKKSPKKLENDEKGLM. Polar residues predominate over residues 71–108; that stretch reads INKTDNTASNESNAGNVNTCPSASPFSDLNEVSRNGLT. Residues 187–196 are compositionally biased toward acidic residues; it reads EEEDDDDDYA.

This sequence belongs to the UPF0688 family.

Its subcellular location is the nucleus. In Xenopus laevis (African clawed frog), this protein is UPF0688 protein C1orf174 homolog.